The chain runs to 34 residues: Kappa-theraphotoxin-Sc1a (34 aa).

Cystine bridges form between cysteine 2/cysteine 16, cysteine 9/cysteine 21, and cysteine 15/cysteine 28. Position 34 is an isoleucine amide (isoleucine 34).

The protein belongs to the neurotoxin 10 (Hwtx-1) family. 57 (ScTx1) subfamily. In terms of tissue distribution, expressed by the venom gland.

The protein localises to the secreted. Its function is as follows. Acts as a gating-modifier to inhibit voltage-gated potassium channels. It inhibits delayed Kv2.1/KCNB1 (IC(50) is 12.7 nM), Kv2.1/Kv9.3 (IC(50) is 7.2 nM) (KCNB1/KCNS3), Kv2.2/KCNB2 (IC(50) is 21.4 nM), and transient Kv4.2/KCND2 (IC(50) is 1.2 nM) channels. The protein is Kappa-theraphotoxin-Sc1a of Stromatopelma calceatum (Featherleg baboon tarantula).